The primary structure comprises 79 residues: Sec-independent protein translocase protein TatA (79 aa).

Residues 1–21 (MGSLSIWHWIVVIAVILLLFG) traverse the membrane as a helical segment. The span at 43 to 60 (MQDDEKTAEKPEPVKTID) shows a compositional bias: basic and acidic residues. The segment at 43 to 79 (MQDDEKTAEKPEPVKTIDHNAPAPGASRSDVGSKTTV) is disordered.

It belongs to the TatA/E family. As to quaternary structure, the Tat system comprises two distinct complexes: a TatABC complex, containing multiple copies of TatA, TatB and TatC subunits, and a separate TatA complex, containing only TatA subunits. Substrates initially bind to the TatABC complex, which probably triggers association of the separate TatA complex to form the active translocon.

The protein resides in the cell inner membrane. In terms of biological role, part of the twin-arginine translocation (Tat) system that transports large folded proteins containing a characteristic twin-arginine motif in their signal peptide across membranes. TatA could form the protein-conducting channel of the Tat system. The polypeptide is Sec-independent protein translocase protein TatA (Nitrobacter hamburgensis (strain DSM 10229 / NCIMB 13809 / X14)).